A 1024-amino-acid chain; its full sequence is RNA cytidine acetyltransferase (1024 aa).

287 to 296 is an ATP binding site; that stretch reads GRGKSAALGL. Lys426 bears the N6-acetyllysine mark. Position 470 (Arg470) interacts with ATP. An N-acetyltransferase domain is found at 558-753; the sequence is CLLPPVPPTQ…HSCIMLKTLA (196 aa). Residues 629 to 631 and 636 to 642 contribute to the acetyl-CoA site; these read IAV and QGMGYGS. Residues 702-1024 are required for localization to the nucleolus and midbody; it reads PAERLDYLGV…RKDMKLKRKK (323 aa). At Thr716 the chain carries Phosphothreonine. Arg725 is an acetyl-CoA binding site. Phosphoserine occurs at positions 934, 984, and 987. The tract at residues 990–1024 is disordered; sequence SDKKRKLETKQEPKQSKKLKKRDNNRKDMKLKRKK. Residues 1005 to 1024 are compositionally biased toward basic residues; the sequence is SKKLKKRDNNRKDMKLKRKK.

The protein belongs to the RNA cytidine acetyltransferase family. NAT10 subfamily. In terms of assembly, part of the small subunit (SSU) processome, composed of more than 70 proteins and the RNA chaperone small nucleolar RNA (snoRNA) U3. Interacts with THUMPD1. Interacts with SUN1 (via N-terminus). Interacts with TERT.

The protein resides in the nucleus. The protein localises to the nucleolus. The catalysed reaction is a cytidine in 18S rRNA + acetyl-CoA + ATP + H2O = an N(4)-acetylcytidine in 18S rRNA + ADP + phosphate + CoA + H(+). The enzyme catalyses a cytidine in tRNA + acetyl-CoA + ATP + H2O = an N(4)-acetylcytidine in tRNA + ADP + phosphate + CoA + H(+). It carries out the reaction a cytidine in mRNA + acetyl-CoA + ATP + H2O = an N(4)-acetylcytidine in mRNA + ADP + phosphate + CoA + H(+). In terms of biological role, RNA cytidine acetyltransferase that catalyzes the formation of N(4)-acetylcytidine (ac4C) modification on mRNAs, 18S rRNA and tRNAs. Catalyzes ac4C modification of a broad range of mRNAs, enhancing mRNA stability and translation. mRNA ac4C modification is frequently present within wobble cytidine sites and promotes translation efficiency. Mediates the formation of ac4C at position 1842 in 18S rRNA. May also catalyze the formation of ac4C at position 1337 in 18S rRNA. Required for early nucleolar cleavages of precursor rRNA at sites A0, A1 and A2 during 18S rRNA synthesis. Catalyzes the formation of ac4C in serine and leucine tRNAs. Requires the tRNA-binding adapter protein THUMPD1 for full tRNA acetyltransferase activity but not for 18S rRNA acetylation. In addition to RNA acetyltransferase activity, also able to acetylate lysine residues of proteins, such as histones, microtubules, p53/TP53 and MDM2, in vitro. The relevance of the protein lysine acetyltransferase activity is however unsure in vivo. Activates telomerase activity by stimulating the transcription of TERT, and may also regulate telomerase function by affecting the balance of telomerase subunit assembly, disassembly, and localization. Involved in the regulation of centrosome duplication by acetylating CENATAC during mitosis, promoting SASS6 proteasome degradation. Part of the small subunit (SSU) processome, first precursor of the small eukaryotic ribosomal subunit. During the assembly of the SSU processome in the nucleolus, many ribosome biogenesis factors, an RNA chaperone and ribosomal proteins associate with the nascent pre-rRNA and work in concert to generate RNA folding, modifications, rearrangements and cleavage as well as targeted degradation of pre-ribosomal RNA by the RNA exosome. The sequence is that of RNA cytidine acetyltransferase from Mus musculus (Mouse).